The following is a 686-amino-acid chain: Cyclic nucleotide-gated channel alpha-1 (686 aa).

The Cytoplasmic portion of the chain corresponds to 1-165; sequence MKNNIINTQQ…PSGNTYYNWL (165 aa). Disordered regions lie at residues 31–75 and 87–149; these read ENGA…PSQR and NVNN…EEKK. The segment covering 39–53 has biased composition (acidic residues); it reads SEDDDSASTSEESEN. The span at 110 to 124 shows a compositional bias: basic and acidic residues; the sequence is SKSDDKNENKNDPEK. The segment covering 125-134 has biased composition (basic residues); the sequence is KKKKKDKEKK. Residues 135-149 show a composition bias toward basic and acidic residues; the sequence is KKEEKSKDKKEEEKK. A helical transmembrane segment spans residues 166–187; sequence FCITLPVMYNWTMVIARACFDE. The Extracellular portion of the chain corresponds to 188 to 197; it reads LQSDYLEYWL. Residues 198–218 form a helical membrane-spanning segment; it reads ILDYVSDIVYLIDMFVRTRTG. The Cytoplasmic portion of the chain corresponds to 219–243; it reads YLEQGLLVKEELKLINKYKSNLQFK. A helical transmembrane segment spans residues 244 to 262; it reads LDVLSLIPTDLLYFKLGWN. The Extracellular portion of the chain corresponds to 263–267; that stretch reads YPEIR. A helical membrane pass occupies residues 268-286; the sequence is LNRLLRFSRMFEFFQRTET. The Cytoplasmic portion of the chain corresponds to 287–293; sequence RTNYPNI. An ion conduction pathway region spans residues 291-399; sequence PNIFRISNLV…GNIGSMISNM (109 aa). Residues 294–317 form a helical membrane-spanning segment; it reads FRISNLVMYIVIIIHWNACVFYSI. Over 318-340 the chain is Extracellular; sequence SKAIGFGNDTWVYPDINDPEFGR. The N-linked (GlcNAc...) asparagine glycan is linked to N325. Helical transmembrane passes span 341-375 and 376-400; these read LARK…VFVV and VDFL…SNMN. Residues 358-361 form a selectivity filter region; the sequence is TIGE. The tract at residues 401–477 is C-linker; it reads AARAEFQARI…DTLKKVRIFA (77 aa). Residues 401 to 686 lie on the Cytoplasmic side of the membrane; that stretch reads AARAEFQARI…GAESGPIDST (286 aa). The tract at residues 481–601 is cyclic nucleotide-binding domain; sequence AGLLVELVLK…EEKGKQILMK (121 aa). 4 residues coordinate 3',5'-cyclic GMP: G541, S544, R557, and T558. 3',5'-cyclic AMP is bound by residues R557 and T558. Residues 619 to 673 are a coiled coil; the sequence is LEEKVTRMEGSVDLLQTRFARILAEYESMQQKLKQRLTKVEKFLKPLIDTEFSSI.

This sequence belongs to the cyclic nucleotide-gated cation channel (TC 1.A.1.5) family. CNGA1 subfamily. As to quaternary structure, forms heterotetrameric channels composed of CNGA1 and CNGB1 subunits with 3:1 stoichiometry. May also form cyclic nucleotide-activated homotetrameric channels, that are efficiently activated by saturating cGMP, but poorly activated by saturating cAMP compared to the heterotetramer with CNGB1. The channel binds Ca(2+)-bound CALM1 via CaM1 and CaM2 regions of the CNGB1 subunit; this interaction modulates the affinity of the channel for cNMPs in response to intracellular Ca(2+) levels. In terms of tissue distribution, rod cells in the retina.

It localises to the cell membrane. It carries out the reaction Ca(2+)(in) = Ca(2+)(out). The enzyme catalyses Na(+)(in) = Na(+)(out). It catalyses the reaction K(+)(in) = K(+)(out). The catalysed reaction is NH4(+)(in) = NH4(+)(out). It carries out the reaction Rb(+)(in) = Rb(+)(out). The enzyme catalyses Li(+)(in) = Li(+)(out). It catalyses the reaction Cs(+)(in) = Cs(+)(out). With respect to regulation, channel opening is activated by cGMP and at a much lesser extent by cAMP. Ca(2+) binding concominantly blocks monovalent cation currents. Inhibited by L-cis-diltiazem. In terms of biological role, pore-forming subunit of the rod cyclic nucleotide-gated channel. Mediates rod photoresponses at dim light converting transient changes in intracellular cGMP levels into electrical signals. In the dark, cGMP levels are high and keep the channel open enabling a steady inward current carried by Na(+) and Ca(2+) ions that leads to membrane depolarization and neurotransmitter release from synaptic terminals. Upon photon absorption cGMP levels decline leading to channel closure and membrane hyperpolarization that ultimately slows neurotransmitter release and signals the presence of light, the end point of the phototransduction cascade. Conducts cGMP- and cAMP-gated ion currents, with permeability for monovalent and divalent cations. The selectivity for Ca(2+) over Na(+) increases with cGMP concentrations, whereas the selectivity among monovalent ions is independent of the cGMP levels. This is Cyclic nucleotide-gated channel alpha-1 from Homo sapiens (Human).